A 135-amino-acid polypeptide reads, in one-letter code: Putative nickel-responsive regulator (135 aa).

Residues H79, H90, H92, and C98 each coordinate Ni(2+).

This sequence belongs to the transcriptional regulatory CopG/NikR family. The cofactor is Ni(2+).

Its function is as follows. Transcriptional regulator. The protein is Putative nickel-responsive regulator of Dictyoglomus thermophilum (strain ATCC 35947 / DSM 3960 / H-6-12).